The sequence spans 208 residues: 3-demethoxyubiquinol 3-hydroxylase (208 aa).

6 residues coordinate Fe cation: E57, E87, H90, E139, E171, and H174.

It belongs to the COQ7 family. Requires Fe cation as cofactor.

It is found in the cell membrane. It carries out the reaction a 5-methoxy-2-methyl-3-(all-trans-polyprenyl)benzene-1,4-diol + AH2 + O2 = a 3-demethylubiquinol + A + H2O. It participates in cofactor biosynthesis; ubiquinone biosynthesis. Its function is as follows. Catalyzes the hydroxylation of 2-nonaprenyl-3-methyl-6-methoxy-1,4-benzoquinol during ubiquinone biosynthesis. This Burkholderia vietnamiensis (strain G4 / LMG 22486) (Burkholderia cepacia (strain R1808)) protein is 3-demethoxyubiquinol 3-hydroxylase.